A 399-amino-acid chain; its full sequence is Organelle RRM domain-containing protein 1, chloroplastic (399 aa).

A chloroplast-targeting transit peptide spans 1 to 52 (MDAARASLLLAGGLAVSTSTSAVATAAQTVSIPHLSPHTRRRRQRRFLRLAS). The 79-residue stretch at 295 to 373 (KRLFVTGLSF…WMIVVDVAKH (79 aa)) folds into the RRM domain. A disordered region spans residues 377 to 399 (DRQPPYSASGRSNQVLRSRYHTG).

It is found in the plastid. It localises to the chloroplast. In terms of biological role, involved in C-to-U editing of chloroplastic RNA. Functions as major chloroplastic editing factor. Controls a majority of the chloroplastic editing sites. In Oryza sativa subsp. japonica (Rice), this protein is Organelle RRM domain-containing protein 1, chloroplastic.